We begin with the raw amino-acid sequence, 92 residues long: Putative regulatory protein CKL_1364 (92 aa).

The protein belongs to the RemA family.

This is Putative regulatory protein CKL_1364 from Clostridium kluyveri (strain ATCC 8527 / DSM 555 / NBRC 12016 / NCIMB 10680 / K1).